The sequence spans 173 residues: RNA silencing suppressor p19 (173 aa).

The span at 1–21 shows a compositional bias: basic and acidic residues; sequence MERAIQRSDAREQANSERWDG. Positions 1 to 34 are disordered; it reads MERAIQRSDAREQANSERWDGRCGGTITPFKLPD.

Belongs to the tombusvirus protein p19 family. Homodimer.

Viral suppressor of RNA silencing which binds specifically to silencing RNAs (siRNAs). Acts as a molecular caliper to specifically select siRNAs based on the length of the duplex region of the RNA. In Cucumis sativus (Cucumber), this protein is RNA silencing suppressor p19.